A 279-amino-acid polypeptide reads, in one-letter code: Putative E3 ubiquitin-protein ligase C36B7.05c (279 aa).

The FYVE-type zinc finger occupies 27 to 122; sequence DDESAQCNNC…VCVNCRQQLS (96 aa). Residues Cys33, Cys36, Cys49, Cys52, Cys57, Cys60, Cys114, and Cys117 each contribute to the Zn(2+) site. A Phosphoserine modification is found at Ser200. An RING-type; atypical zinc finger spans residues 230-273; sequence CIICFEEFAAGDRVARIEYCLCIFHLKCYRDWLSTGAAGCPVHA.

It is found in the cytoplasm. The protein localises to the nucleus. Its subcellular location is the endosome membrane. The protein resides in the vacuole membrane. The catalysed reaction is S-ubiquitinyl-[E2 ubiquitin-conjugating enzyme]-L-cysteine + [acceptor protein]-L-lysine = [E2 ubiquitin-conjugating enzyme]-L-cysteine + N(6)-ubiquitinyl-[acceptor protein]-L-lysine.. Its pathway is protein modification; protein ubiquitination. In terms of biological role, functions as an E3 ubiquitin-protein ligase. Binds phospholipid vesicles containing phosphatidylinositol 3-phosphate. The chain is Putative E3 ubiquitin-protein ligase C36B7.05c from Schizosaccharomyces pombe (strain 972 / ATCC 24843) (Fission yeast).